A 208-amino-acid polypeptide reads, in one-letter code: Small ribosomal subunit protein uS4 (208 aa).

Residues 98–161 enclose the S4 RNA-binding domain; the sequence is QRLDNVVYRM…KTNSQILRAI (64 aa).

This sequence belongs to the universal ribosomal protein uS4 family. In terms of assembly, part of the 30S ribosomal subunit. Contacts protein S5. The interaction surface between S4 and S5 is involved in control of translational fidelity.

Functionally, one of the primary rRNA binding proteins, it binds directly to 16S rRNA where it nucleates assembly of the body of the 30S subunit. Its function is as follows. With S5 and S12 plays an important role in translational accuracy. The sequence is that of Small ribosomal subunit protein uS4 from Sulfurovum sp. (strain NBC37-1).